Reading from the N-terminus, the 238-residue chain is Cysteine-rich venom protein (238 aa).

The signal sequence occupies residues 1 to 19; that stretch reads MIAFIVLLSLAAVLQQSSG. One can recognise an SCP domain in the interval 38–164; it reads VDKHNALRRS…STKYLYVCQY (127 aa). Intrachain disulfides connect cysteine 75–cysteine 153, cysteine 92–cysteine 165, cysteine 148–cysteine 162, cysteine 184–cysteine 191, cysteine 187–cysteine 196, cysteine 200–cysteine 233, cysteine 209–cysteine 227, and cysteine 218–cysteine 231. Positions 200–233 constitute a ShKT domain; that stretch reads CKYEDAFTNCNELAKETKCKTEWIKSKCPATCFC.

The protein belongs to the CRISP family. As to expression, expressed by the venom gland.

Its subcellular location is the secreted. In terms of biological role, blocks olfactory (CNGA2) and retinal (CNGA1) CNG channel currents. Does not affect neither depolarization- nor caffeine-induced contraction of smooth muscle. The sequence is that of Cysteine-rich venom protein from Drysdalia coronoides (White-lipped snake).